We begin with the raw amino-acid sequence, 1041 residues long: Protein SMAX1-like (1041 aa).

Residues 8–188 enclose the Clp R domain; the sequence is IQQTLTPEAA…KSIIEQSLSA (181 aa). Repeat stretches follow at residues 12 to 98 and 117 to 188; these read LTPE…LDRL and VSNA…SLSA. The span at 189 to 205 shows a compositional bias: low complexity; the sequence is PSPCPSAAASTTTAGPG. Disordered stretches follow at residues 189–214, 482–513, and 889–913; these read PSPC…PSPL, EAEQ…QNKA, and EGSH…VKRS. A compositionally biased stretch (basic and acidic residues) spans 482–495; it reads EAEQTDKPASRPEA. Polar residues predominate over residues 891 to 900; that stretch reads SHNSSDVSVE.

It belongs to the ClpA/ClpB family.

Its function is as follows. May act downstream of MAX2 to negatively regulate karrikins/strigolactone responses. Acts probably specifically in the karrikin pathway. May function in a transcriptional corepressor complex. This Oryza sativa subsp. japonica (Rice) protein is Protein SMAX1-like.